A 37-amino-acid chain; its full sequence is MLRAIVVFAPIIAAVAWVVFNIQKPAREQWDRQFGEK.

Residues 4–22 (AIVVFAPIIAAVAWVVFNI) traverse the membrane as a helical segment.

The protein belongs to the PsbY family. As to quaternary structure, PSII is composed of 1 copy each of membrane proteins PsbA, PsbB, PsbC, PsbD, PsbE, PsbF, PsbH, PsbI, PsbJ, PsbK, PsbL, PsbM, PsbT, PsbX, PsbY, Psb30/Ycf12, peripheral proteins PsbO, CyanoQ (PsbQ), PsbU, PsbV and a large number of cofactors. It forms dimeric complexes.

It localises to the cellular thylakoid membrane. Functionally, loosely associated component of the core of photosystem II (PSII), it is not always seen in crystals. PSII is a light-driven water plastoquinone oxidoreductase, using light energy to abstract electrons from H(2)O, generating a proton gradient subsequently used for ATP formation. The sequence is that of Photosystem II reaction center protein Y from Prochlorococcus marinus (strain MIT 9312).